Consider the following 338-residue polypeptide: Ketol-acid reductoisomerase (NADP(+)) (338 aa).

The KARI N-terminal Rossmann domain maps to 1–181 (MKIYYDKDCN…GGGRAGIIET (181 aa)). NADP(+)-binding positions include 24 to 27 (YGSQ), Lys47, Ser50, Ser52, and 82 to 85 (DEIQ). His107 is a catalytic residue. Gly133 serves as a coordination point for NADP(+). The region spanning 182–327 (SFKEETETDL…ARLRSMMSWI (146 aa)) is the KARI C-terminal knotted domain. The Mg(2+) site is built by Asp190, Glu194, Glu226, and Glu230. A substrate-binding site is contributed by Ser251.

This sequence belongs to the ketol-acid reductoisomerase family. Mg(2+) is required as a cofactor.

It catalyses the reaction (2R)-2,3-dihydroxy-3-methylbutanoate + NADP(+) = (2S)-2-acetolactate + NADPH + H(+). The enzyme catalyses (2R,3R)-2,3-dihydroxy-3-methylpentanoate + NADP(+) = (S)-2-ethyl-2-hydroxy-3-oxobutanoate + NADPH + H(+). It functions in the pathway amino-acid biosynthesis; L-isoleucine biosynthesis; L-isoleucine from 2-oxobutanoate: step 2/4. The protein operates within amino-acid biosynthesis; L-valine biosynthesis; L-valine from pyruvate: step 2/4. Functionally, involved in the biosynthesis of branched-chain amino acids (BCAA). Catalyzes an alkyl-migration followed by a ketol-acid reduction of (S)-2-acetolactate (S2AL) to yield (R)-2,3-dihydroxy-isovalerate. In the isomerase reaction, S2AL is rearranged via a Mg-dependent methyl migration to produce 3-hydroxy-3-methyl-2-ketobutyrate (HMKB). In the reductase reaction, this 2-ketoacid undergoes a metal-dependent reduction by NADPH to yield (R)-2,3-dihydroxy-isovalerate. The protein is Ketol-acid reductoisomerase (NADP(+)) of Geobacter sulfurreducens (strain ATCC 51573 / DSM 12127 / PCA).